Reading from the N-terminus, the 228-residue chain is 2,3-bisphosphoglycerate-dependent phosphoglycerate mutase (228 aa).

Substrate-binding positions include 8–15 (RHGQSEWN), 21–22 (TG), arginine 60, 87–90 (ERHY), lysine 98, 114–115 (RR), and 183–184 (GN). Residue histidine 9 is the Tele-phosphohistidine intermediate of the active site. Glutamate 87 serves as the catalytic Proton donor/acceptor.

This sequence belongs to the phosphoglycerate mutase family. BPG-dependent PGAM subfamily.

The enzyme catalyses (2R)-2-phosphoglycerate = (2R)-3-phosphoglycerate. It functions in the pathway carbohydrate degradation; glycolysis; pyruvate from D-glyceraldehyde 3-phosphate: step 3/5. Catalyzes the interconversion of 2-phosphoglycerate and 3-phosphoglycerate. This is 2,3-bisphosphoglycerate-dependent phosphoglycerate mutase from Staphylococcus epidermidis (strain ATCC 12228 / FDA PCI 1200).